A 239-amino-acid chain; its full sequence is Small ribosomal subunit protein uS3c (239 aa).

The 97-residue stretch at 43 to 139 (IKNYIQKNRK…RFNISIEKVK (97 aa)) folds into the KH type-2 domain. The disordered stretch occupies residues 50 to 74 (NRKKGSNRKIESDSSSEVITHNRKM).

Belongs to the universal ribosomal protein uS3 family. Part of the 30S ribosomal subunit.

It is found in the plastid. It localises to the chloroplast. The sequence is that of Small ribosomal subunit protein uS3c (rps3) from Hordeum vulgare (Barley).